We begin with the raw amino-acid sequence, 201 residues long: LexA repressor (201 aa).

Residues 29–49 constitute a DNA-binding region (H-T-H motif); it reads VREICKAVGLSSTSSVHFHLK. Catalysis depends on for autocatalytic cleavage activity residues Ser-125 and Lys-162.

This sequence belongs to the peptidase S24 family. As to quaternary structure, homodimer.

It catalyses the reaction Hydrolysis of Ala-|-Gly bond in repressor LexA.. Functionally, represses a number of genes involved in the response to DNA damage (SOS response), including recA and lexA. In the presence of single-stranded DNA, RecA interacts with LexA causing an autocatalytic cleavage which disrupts the DNA-binding part of LexA, leading to derepression of the SOS regulon and eventually DNA repair. This chain is LexA repressor, found in Clostridium botulinum (strain ATCC 19397 / Type A).